The primary structure comprises 883 residues: Brevican core protein (883 aa).

A signal peptide spans 1–22; the sequence is MIPLLLSLLAALVLTQAPAALA. The region spanning 35 to 154 is the Ig-like V-type domain; that stretch reads FRVRIGATQL…SSDAVEVKVK (120 aa). Disulfide bonds link Cys56–Cys136, Cys178–Cys249, Cys202–Cys223, Cys276–Cys351, and Cys300–Cys321. Asn129 carries N-linked (GlcNAc...) asparagine glycosylation. 2 consecutive Link domains span residues 156–251 and 256–353; these read VVFL…YCYA and GELF…YCFR. At Ser224 the chain carries Phosphoserine. An N-linked (GlcNAc...) asparagine glycan is attached at Asn336. Residues 402 to 592 are disordered; that stretch reads SIPISEDGGG…LETPSEEKSG (191 aa). Ser413 is subject to Phosphoserine. O-linked (Xyl...) (chondroitin sulfate) serine glycosylation is present at Ser413. Composition is skewed to acidic residues over residues 440-451 and 459-468; these read SSEEEGVALEEE and ALEEEKEQED. Positions 479 to 495 are enriched in polar residues; the sequence is PLPTGSETEHSLSQVSP. The segment covering 581–592 has biased composition (basic and acidic residues); the sequence is RELETPSEEKSG. The region spanning 622–658 is the EGF-like domain; it reads SSGDCIPSPCHNGGTCLEEKEGFRCLCLPGYGGDLCD. Cystine bridges form between Cys626–Cys637, Cys631–Cys646, Cys648–Cys657, Cys664–Cys675, Cys692–Cys784, Cys760–Cys776, Cys791–Cys834, and Cys820–Cys847. The region spanning 658 to 786 is the C-type lectin domain; that stretch reads DVGLHFCSPG…NYHLSYTCKM (129 aa). The Sushi domain maps to 789–849; the sequence is VSCGPPPQLP…WEAPQISCVP (61 aa). Residues 854–883 are disordered; it reads RALRSMDAPEGPRGQLSRHRKAPLTPPSSL.

It belongs to the aggrecan/versican proteoglycan family. In terms of assembly, interacts with TNR. Post-translationally, O-glycosylated; contains chondroitin sulfate. Expressed in the retina, specifically around the inner and outer segments of photoreceptors, retinal pigment epithelium, outer plexiform layer, and the ganglion cell layer (at protein level). Brain. Expressed in the brainstem and cerebellum in a perineuronal net pattern.

The protein resides in the secreted. It is found in the extracellular space. The protein localises to the extracellular matrix. May play a role in the terminally differentiating and the adult nervous system during postnatal development. Could stabilize interactions between hyaluronan (HA) and brain proteoglycans. The sequence is that of Brevican core protein (Bcan) from Mus musculus (Mouse).